We begin with the raw amino-acid sequence, 257 residues long: Flap endonuclease Xni (257 aa).

Asp112 serves as a coordination point for Mg(2+). The region spanning 169–256 (EQKKLVEFWA…LGFSLKQLRL (88 aa)) is the 5'-3' exonuclease domain. Residues Phe179, Ala180, Pro188, Val190, and Ile193 each coordinate K(+). The tract at residues 192–197 (GIGTKS) is interaction with DNA.

It belongs to the Xni family. The cofactor is Mg(2+). K(+) serves as cofactor.

Functionally, has flap endonuclease activity. During DNA replication, flap endonucleases cleave the 5'-overhanging flap structure that is generated by displacement synthesis when DNA polymerase encounters the 5'-end of a downstream Okazaki fragment. This is Flap endonuclease Xni from Pseudoalteromonas translucida (strain TAC 125).